Here is a 218-residue protein sequence, read N- to C-terminus: Thiopurine S-methyltransferase (218 aa).

Residues Trp10, Leu45, Glu66, and Arg123 each coordinate S-adenosyl-L-methionine.

This sequence belongs to the class I-like SAM-binding methyltransferase superfamily. TPMT family.

Its subcellular location is the cytoplasm. It carries out the reaction S-adenosyl-L-methionine + a thiopurine = S-adenosyl-L-homocysteine + a thiopurine S-methylether.. This Shewanella baltica (strain OS155 / ATCC BAA-1091) protein is Thiopurine S-methyltransferase.